The primary structure comprises 69 residues: Putative membrane protein insertion efficiency factor (69 aa).

Belongs to the UPF0161 family.

It localises to the cell inner membrane. Functionally, could be involved in insertion of integral membrane proteins into the membrane. In Aromatoleum aromaticum (strain DSM 19018 / LMG 30748 / EbN1) (Azoarcus sp. (strain EbN1)), this protein is Putative membrane protein insertion efficiency factor.